Here is a 255-residue protein sequence, read N- to C-terminus: Thiazole synthase (255 aa).

The Schiff-base intermediate with DXP role is filled by lysine 96. 1-deoxy-D-xylulose 5-phosphate-binding positions include glycine 157, 183–184 (AG), and 205–206 (NT).

It belongs to the ThiG family. Homotetramer. Forms heterodimers with either ThiH or ThiS.

Its subcellular location is the cytoplasm. It carries out the reaction [ThiS sulfur-carrier protein]-C-terminal-Gly-aminoethanethioate + 2-iminoacetate + 1-deoxy-D-xylulose 5-phosphate = [ThiS sulfur-carrier protein]-C-terminal Gly-Gly + 2-[(2R,5Z)-2-carboxy-4-methylthiazol-5(2H)-ylidene]ethyl phosphate + 2 H2O + H(+). The protein operates within cofactor biosynthesis; thiamine diphosphate biosynthesis. Functionally, catalyzes the rearrangement of 1-deoxy-D-xylulose 5-phosphate (DXP) to produce the thiazole phosphate moiety of thiamine. Sulfur is provided by the thiocarboxylate moiety of the carrier protein ThiS. In vitro, sulfur can be provided by H(2)S. The protein is Thiazole synthase of Staphylococcus haemolyticus (strain JCSC1435).